Consider the following 280-residue polypeptide: Merozoite surface protein 2 (280 aa).

Residues 1–20 (MKVIKTLSIINFFIFVTFNI) form the signal peptide. N-linked (GlcNAc...) asparagine glycosylation is found at Asn-22 and Asn-36. Residues 44–206 (ANEGSNTKSV…PQTAENENPA (163 aa)) are polymorphic region. The disordered stretch occupies residues 47-242 (GSNTKSVGAN…SQKECTDGNK (196 aa)). Positions 51-74 (KSVGANAPKADTIASGSQSSTNSA) are 5 X 12 AA tandem repeats of P-P-I-T-T-T-E-S-N-S-R-S. A compositionally biased stretch (low complexity) spans 64–98 (ASGSQSSTNSASTSTTNNGESQTTTPTAADTPTAT). Residues 99-149 (ESNSRSPPITTTESNSRSPPITTTESNSRSPPITTTESNSRSPPITTTESN) are compositionally biased toward polar residues. Repeat copies occupy residues 105–116 (PPITTTESNSRS), 117–128 (PPITTTESNSRS), 129–140 (PPITTTESNSRS), and 141–152 (PPITTTESNSRS). Over residues 150–163 (SRSPPITTTESSSS) the composition is skewed to low complexity. The stretch at 153 to 160 (PPITTTES) is one 5; partial repeat. N-linked (GlcNAc...) asparagine glycosylation occurs at Asn-168. The segment covering 170-182 (TDGKGEESEKQNE) has biased composition (basic and acidic residues). N-linked (GlcNAc...) asparagine glycosylation is found at Asn-184 and Asn-229. Basic and acidic residues predominate over residues 233 to 242 (SQKECTDGNK). Cys-237 and Cys-245 are joined by a disulfide. N-linked (GlcNAc...) asparagine glycans are attached at residues Asn-253 and Asn-254. Residue Asn-254 is the site of GPI-anchor amidated asparagine attachment. Residues 255–280 (SSNIASINKFVVLISATLVLSFAIFI) constitute a propeptide, removed in mature form.

It is found in the cell membrane. Its function is as follows. May play a role in the merozoite attachment to the erythrocyte. The chain is Merozoite surface protein 2 from Plasmodium falciparum (isolate K1 / Thailand).